A 340-amino-acid chain; its full sequence is Nod factor export ATP-binding protein I (340 aa).

A compositionally biased stretch (basic and acidic residues) spans 1–24 (MLKRKLGPEDLRRLETPAIERESH). Positions 1-34 (MLKRKLGPEDLRRLETPAIERESHGQTSAKSSVP) are disordered. The segment covering 25 to 34 (GQTSAKSSVP) has biased composition (polar residues). The 231-residue stretch at 42 to 272 (VDFAGVTKSY…HIGCQVMEIY (231 aa)) folds into the ABC transporter domain. 74 to 81 (GPNGAGKS) is an ATP binding site.

The protein belongs to the ABC transporter superfamily. Lipooligosaccharide exporter (TC 3.A.1.102) family. The complex is composed of two ATP-binding proteins (NodI) and two transmembrane proteins (NodJ).

The protein localises to the cell inner membrane. In terms of biological role, part of the ABC transporter complex NodIJ involved in the export of the nodulation factors (Nod factors), the bacterial signal molecules that induce symbiosis and subsequent nodulation induction. Nod factors are LCO (lipo-chitin oligosaccharide), a modified beta-1,4-linked N-acetylglucosamine oligosaccharide. This subunit is responsible for energy coupling to the transport system. The sequence is that of Nod factor export ATP-binding protein I from Mesorhizobium japonicum (strain LMG 29417 / CECT 9101 / MAFF 303099) (Mesorhizobium loti (strain MAFF 303099)).